The primary structure comprises 329 residues: Beta-ketoacyl-[acyl-carrier-protein] synthase III (329 aa).

Active-site residues include cysteine 123 and histidine 256. Residues 257–261 (QANIR) form an ACP-binding region. The active site involves asparagine 286.

Belongs to the thiolase-like superfamily. FabH family. In terms of assembly, homodimer.

The protein localises to the cytoplasm. It catalyses the reaction malonyl-[ACP] + acetyl-CoA + H(+) = 3-oxobutanoyl-[ACP] + CO2 + CoA. The protein operates within lipid metabolism; fatty acid biosynthesis. Catalyzes the condensation reaction of fatty acid synthesis by the addition to an acyl acceptor of two carbons from malonyl-ACP. Catalyzes the first condensation reaction which initiates fatty acid synthesis and may therefore play a role in governing the total rate of fatty acid production. Possesses both acetoacetyl-ACP synthase and acetyl transacylase activities. Its substrate specificity determines the biosynthesis of branched-chain and/or straight-chain of fatty acids. This Burkholderia pseudomallei (strain 1710b) protein is Beta-ketoacyl-[acyl-carrier-protein] synthase III.